Here is a 376-residue protein sequence, read N- to C-terminus: MQGFKIARHFELPTAPSQFFAGSSLNRLSFLRSNREFLNKAFYDHTTRFLPFCDLNPALLVKDDKLVTLSYPQISKYFTFSPFEHTDKQIAERFSKGESLPVLVYMGNEERNGPTDNWSQHNVFAIDITGIDELQQSIRDNGGTFVNLRSIFTEQYQLSASDSGACAFARSILDWISRYRFCPGCGKRNIPTMGGTKLVCSDVLLNDDSNCPSKKGINNYQYPRTDPCVIMVILSHDMQHILLGRALRHPKGLYACLAGFLEPGESLEEAVVRETYEESGVDVEKVLYYASQPWPFPQSLMLACFGIARKNAKIQRDKDLELEDVRFFSREEVLRSLEWDAKDGPAPILFPPKLSIARNLIQAFAYDDWTNSQVKM.

Cys-182, Cys-185, Cys-200, and Cys-211 together coordinate Zn(2+). Substrate contacts are provided by residues Tyr-222, 258-260 (AGF), Glu-274, Glu-278, and Glu-321. Residues 223–351 (PRTDPCVIMV…KDGPAPILFP (129 aa)) form the Nudix hydrolase domain. Residues Ala-258, Glu-274, Glu-278, and Glu-321 each coordinate Mg(2+). The Nudix box signature appears at 259–280 (GFLEPGESLEEAVVRETYEESG). A Microbody targeting signal motif is present at residues 374–376 (VKM).

This sequence belongs to the Nudix hydrolase family. NudC subfamily. Homodimer. Mg(2+) serves as cofactor. Zn(2+) is required as a cofactor.

The catalysed reaction is a 5'-end NAD(+)-phospho-ribonucleoside in mRNA + H2O = a 5'-end phospho-adenosine-phospho-ribonucleoside in mRNA + beta-nicotinamide D-ribonucleotide + 2 H(+). The enzyme catalyses NAD(+) + H2O = beta-nicotinamide D-ribonucleotide + AMP + 2 H(+). It catalyses the reaction NADH + H2O = reduced beta-nicotinamide D-ribonucleotide + AMP + 2 H(+). Its function is as follows. mRNA decapping enzyme that specifically removes the nicotinamide adenine dinucleotide (NAD) cap from a subset of mRNAs by hydrolyzing the diphosphate linkage to produce nicotinamide mononucleotide (NMN) and 5' monophosphate mRNA. The NAD-cap is present at the 5'-end of some RNAs; in contrast to the canonical N7 methylguanosine (m7G) cap, the NAD cap promotes mRNA decay. Mediates the hydrolysis of some nucleoside diphosphate derivatives. The sequence is that of NAD-capped RNA hydrolase from Schizosaccharomyces pombe (strain 972 / ATCC 24843) (Fission yeast).